We begin with the raw amino-acid sequence, 122 residues long: Ribosome-binding factor A (122 aa).

It belongs to the RbfA family. Monomer. Binds 30S ribosomal subunits, but not 50S ribosomal subunits or 70S ribosomes.

Its subcellular location is the cytoplasm. Its function is as follows. One of several proteins that assist in the late maturation steps of the functional core of the 30S ribosomal subunit. Associates with free 30S ribosomal subunits (but not with 30S subunits that are part of 70S ribosomes or polysomes). Required for efficient processing of 16S rRNA. May interact with the 5'-terminal helix region of 16S rRNA. The protein is Ribosome-binding factor A of Caldanaerobacter subterraneus subsp. tengcongensis (strain DSM 15242 / JCM 11007 / NBRC 100824 / MB4) (Thermoanaerobacter tengcongensis).